The following is a 119-amino-acid chain: Ribosome-binding factor A (119 aa).

Belongs to the RbfA family. As to quaternary structure, monomer. Binds 30S ribosomal subunits, but not 50S ribosomal subunits or 70S ribosomes.

The protein resides in the cytoplasm. Its function is as follows. One of several proteins that assist in the late maturation steps of the functional core of the 30S ribosomal subunit. Associates with free 30S ribosomal subunits (but not with 30S subunits that are part of 70S ribosomes or polysomes). Required for efficient processing of 16S rRNA. May interact with the 5'-terminal helix region of 16S rRNA. The chain is Ribosome-binding factor A from Chlorobium luteolum (strain DSM 273 / BCRC 81028 / 2530) (Pelodictyon luteolum).